Here is an 857-residue protein sequence, read N- to C-terminus: Glucans biosynthesis glucosyltransferase H (857 aa).

A run of 6 helical transmembrane segments spans residues Ile142–Leu162, Ile196–Met216, Val515–Leu535, Leu572–Trp592, Thr606–Phe626, and Phe682–Ile702.

Belongs to the glycosyltransferase 2 family. OpgH subfamily.

The protein localises to the cell inner membrane. It functions in the pathway glycan metabolism; osmoregulated periplasmic glucan (OPG) biosynthesis. Its function is as follows. Involved in the biosynthesis of osmoregulated periplasmic glucans (OPGs). The polypeptide is Glucans biosynthesis glucosyltransferase H (Pseudomonas putida (strain ATCC 700007 / DSM 6899 / JCM 31910 / BCRC 17059 / LMG 24140 / F1)).